A 360-amino-acid polypeptide reads, in one-letter code: Mannan endo-1,4-beta-mannosidase (360 aa).

Positions 1-24 (MLKKLAVCLSIVLLLLGAASPISA) are cleaved as a signal peptide. In terms of domain architecture, GH26 spans 36 to 347 (QTTKDIMNWL…YQNSWTLNKG (312 aa)). His-129 contacts substrate. The active-site Proton donor is the Glu-191. Substrate is bound by residues Trp-196 and Tyr-266. Residue Glu-290 is the Nucleophile of the active site.

The protein belongs to the glycosyl hydrolase 26 family. Homodimer.

It is found in the secreted. It catalyses the reaction Random hydrolysis of (1-&gt;4)-beta-D-mannosidic linkages in mannans, galactomannans and glucomannans.. Functionally, involved in the degradation of glucomannan. Catalyzes the endo hydrolysis of beta-1,4-linked mannan, galactomannan and glucomannan. This Bacillus subtilis protein is Mannan endo-1,4-beta-mannosidase.